The primary structure comprises 262 residues: Homeobox protein vent1 (262 aa).

Composition is skewed to basic and acidic residues over residues Arg16–Val26 and Tyr44–Gln55. The segment at Arg16–Arg129 is disordered. Polar residues predominate over residues Gly58–Ser79. The segment covering Asp114–Arg128 has biased composition (basic and acidic residues). Residues Gln127 to Ile186 constitute a DNA-binding region (homeobox).

The protein resides in the nucleus. Transcriptional repressor. Cooperates with vent2 in a ventral signaling pathway downstream of bmp4, which antagonizes the Spemann organizer and dorsal mesoderm formation, and leads to ventral mesoderm formation. Acts downstream of bmp4 to repress transcription of foxa4-B/XFD-1'. Binds to DNA with preference for the target sequence 5'-CTATT[T/C]G-3'. Also binds 5'-TGCATTTTG-3' at a lower frequency, and occasionally 5'-TTGATC-3'. Binds to the homeobox 2 (HBX2) repressor element in the promoter of the myf5 gene. Cooperates with vent2 to repress myf5 expression in the ventral domain. The protein is Homeobox protein vent1 of Xenopus tropicalis (Western clawed frog).